The chain runs to 218 residues: Cytochrome b6 (218 aa).

Residues 35 to 55 traverse the membrane as a helical segment; the sequence is IFYCLGGITLVCFLIQFATGF. Cys-38 contributes to the heme c binding site. Heme b is bound by residues His-89 and His-103. 3 helical membrane passes run 93 to 113, 119 to 139, and 189 to 209; these read ASMM…TGGF, LTWV…VTGY, and LHTF…FLMI. Positions 190 and 205 each coordinate heme b.

Belongs to the cytochrome b family. PetB subfamily. As to quaternary structure, the 4 large subunits of the cytochrome b6-f complex are cytochrome b6, subunit IV (17 kDa polypeptide, PetD), cytochrome f and the Rieske protein, while the 4 small subunits are PetG, PetL, PetM and PetN. The complex functions as a dimer. It depends on heme b as a cofactor. Heme c serves as cofactor.

The protein resides in the cellular thylakoid membrane. Functionally, component of the cytochrome b6-f complex, which mediates electron transfer between photosystem II (PSII) and photosystem I (PSI), cyclic electron flow around PSI, and state transitions. The chain is Cytochrome b6 from Synechococcus sp. (strain WH7803).